We begin with the raw amino-acid sequence, 186 residues long: UPF0669 protein C6orf120 homolog (186 aa).

A signal peptide spans 1-19; sequence MVPFWAGLLVLSALPQTLG. N-linked (GlcNAc...) asparagine glycosylation is present at asparagine 47. The interval 141 to 165 is disordered; that stretch reads KNSYSSDETPGQPRQSQGPEDTEEE. The span at 142-159 shows a compositional bias: polar residues; it reads NSYSSDETPGQPRQSQGP.

This sequence belongs to the UPF0669 family.

It is found in the secreted. In Danio rerio (Zebrafish), this protein is UPF0669 protein C6orf120 homolog.